The primary structure comprises 103 residues: Large ribosomal subunit protein uL24 (103 aa).

This sequence belongs to the universal ribosomal protein uL24 family. As to quaternary structure, part of the 50S ribosomal subunit.

In terms of biological role, one of two assembly initiator proteins, it binds directly to the 5'-end of the 23S rRNA, where it nucleates assembly of the 50S subunit. One of the proteins that surrounds the polypeptide exit tunnel on the outside of the subunit. The protein is Large ribosomal subunit protein uL24 of Bacillus mycoides (strain KBAB4) (Bacillus weihenstephanensis).